The chain runs to 321 residues: Biotin synthase (321 aa).

Positions 44-270 constitute a Radical SAM core domain; sequence RGVRIHILNN…DAEVRAAGGR (227 aa). [4Fe-4S] cluster is bound by residues Cys-59, Cys-63, and Cys-66. 4 residues coordinate [2Fe-2S] cluster: Cys-103, Cys-135, Cys-195, and Arg-265.

This sequence belongs to the radical SAM superfamily. Biotin synthase family. Homodimer. The cofactor is [4Fe-4S] cluster. Requires [2Fe-2S] cluster as cofactor.

It carries out the reaction (4R,5S)-dethiobiotin + (sulfur carrier)-SH + 2 reduced [2Fe-2S]-[ferredoxin] + 2 S-adenosyl-L-methionine = (sulfur carrier)-H + biotin + 2 5'-deoxyadenosine + 2 L-methionine + 2 oxidized [2Fe-2S]-[ferredoxin]. It participates in cofactor biosynthesis; biotin biosynthesis; biotin from 7,8-diaminononanoate: step 2/2. Its function is as follows. Catalyzes the conversion of dethiobiotin (DTB) to biotin by the insertion of a sulfur atom into dethiobiotin via a radical-based mechanism. The chain is Biotin synthase from Magnetococcus marinus (strain ATCC BAA-1437 / JCM 17883 / MC-1).